The chain runs to 205 residues: High frequency lysogenization protein HflD homolog (205 aa).

It belongs to the HflD family.

The protein localises to the cytoplasm. The protein resides in the cell inner membrane. The protein is High frequency lysogenization protein HflD homolog of Shewanella sp. (strain MR-7).